Here is a 415-residue protein sequence, read N- to C-terminus: T-cell-specific guanine nucleotide triphosphate-binding protein 1 (415 aa).

The IRG-type G domain maps to 55 to 237; the sequence is APLHIAVTGE…PKLETKLLQD (183 aa). The GDP site is built by Gly-66, Gly-68, Lys-69, and Ser-70. Thr-89 carries the post-translational modification (Microbial infection) Phosphothreonine; by ROP17. 4 residues coordinate GDP: Gly-90, Lys-171, Asp-173, and Asn-219.

It belongs to the TRAFAC class dynamin-like GTPase superfamily. IRG family. As to quaternary structure, monomer, homodimer or homotetramer in the presence of GTP. Forms higher order homooligomers in GTP-dependent manner. In terms of assembly, (Microbial infection) Interacts with Toxoplasma gondii ROP18. In terms of processing, (Microbial infection) Phosphorylated by Toxoplasma gondii ROP17; the phosphorylation leads to disassembly of IRGB6 (TGTP1/TGTP2) polymers into monomers and dimers. Phosphorylated by Toxoplasma gondii ROP18. As to expression, expressed in thymus and lymph nodes, predominantly T-cells. Not expressed by immature CD4(+) CD8(+) thymocytes (at protein level). Expressed in IFNG-stimulated macrophages. Expressed at low levels in unstimulated astrocytes. Due to sequence similarity with Tgtp2, it is impossible to assign unambiguously experimental data published in the literature to Tgtp1 or Tgtp2 gene.

Its subcellular location is the cytoplasm. It is found in the endoplasmic reticulum. It localises to the golgi apparatus. The protein localises to the parasitophorous vacuole membrane. It carries out the reaction GTP + H2O = GDP + phosphate + H(+). Its function is as follows. Involved in innate cell-autonomous resistance to intracellular pathogens, such as Toxoplasma gondii. During avirulent type II T.gondii infection, recruited to the parasitophorous vacuole (PV) membrane, leading to PV vesiculation and rupture, and subsequent digestion of the parasite within the cytosol. Not recruited to virulent type I T.gondii PV membrane. May confer an antiviral state for vesicular stomatitis virus. The protein is T-cell-specific guanine nucleotide triphosphate-binding protein 1 (Tgtp1) of Mus musculus (Mouse).